The chain runs to 515 residues: Putative acetolactate synthase large subunit IlvX (515 aa).

Glu-48 is a binding site for thiamine diphosphate. FAD-binding positions include Phe-249–Arg-269 and Asp-283–Asp-302. Residues Thr-357–Ala-436 are thiamine pyrophosphate binding. The Mg(2+) site is built by Asp-407 and Asn-434.

It belongs to the TPP enzyme family. As to quaternary structure, heterodimer of large catalytic subunit and small regulatory subunit. The cofactor is Mg(2+). Thiamine diphosphate serves as cofactor.

The catalysed reaction is 2 pyruvate + H(+) = (2S)-2-acetolactate + CO2. The protein operates within amino-acid biosynthesis; L-isoleucine biosynthesis; L-isoleucine from 2-oxobutanoate: step 1/4. Its pathway is amino-acid biosynthesis; L-valine biosynthesis; L-valine from pyruvate: step 1/4. Its function is as follows. Catalyzes the conversion of 2 pyruvate molecules into acetolactate in the first common step of the biosynthetic pathway of the branched-amino acids such as leucine, isoleucine, and valine. In Mycobacterium tuberculosis (strain ATCC 25618 / H37Rv), this protein is Putative acetolactate synthase large subunit IlvX (ilvX).